The sequence spans 799 residues: Valine--tRNA ligase (799 aa).

Lysine 536 lines the ATP pocket.

It belongs to the class-I aminoacyl-tRNA synthetase family. ValS type 2 subfamily.

It localises to the cytoplasm. It carries out the reaction tRNA(Val) + L-valine + ATP = L-valyl-tRNA(Val) + AMP + diphosphate. Catalyzes the attachment of valine to tRNA(Val). As ValRS can inadvertently accommodate and process structurally similar amino acids such as threonine, to avoid such errors, it has a 'posttransfer' editing activity that hydrolyzes mischarged Thr-tRNA(Val) in a tRNA-dependent manner. The chain is Valine--tRNA ligase (valS) from Pyrobaculum aerophilum (strain ATCC 51768 / DSM 7523 / JCM 9630 / CIP 104966 / NBRC 100827 / IM2).